The primary structure comprises 67 residues: Small ribosomal subunit protein bS21 (67 aa).

It belongs to the bacterial ribosomal protein bS21 family.

The sequence is that of Small ribosomal subunit protein bS21 from Magnetococcus marinus (strain ATCC BAA-1437 / JCM 17883 / MC-1).